We begin with the raw amino-acid sequence, 537 residues long: Arginine--tRNA ligase (537 aa).

The 'HIGH' region motif lies at 113 to 123; it reads ANPTGELHLGH.

Belongs to the class-I aminoacyl-tRNA synthetase family. As to quaternary structure, monomer.

The protein localises to the cytoplasm. The catalysed reaction is tRNA(Arg) + L-arginine + ATP = L-arginyl-tRNA(Arg) + AMP + diphosphate. This Mycoplasma pneumoniae (strain ATCC 29342 / M129 / Subtype 1) (Mycoplasmoides pneumoniae) protein is Arginine--tRNA ligase (argS).